A 300-amino-acid polypeptide reads, in one-letter code: MAADRTAAGTAVRRRQCRGGVRRQRTHVLSSATAGGPHPRNLIGMTVSIPTTPNTRLQGKRCLITAAGAGIGRESALACARAGAHVIATDIDAAALQALAAESDAITTQLLDVTDAAAITALVAAHGPFDVLFNCAGYVHQGSILDCDEPAWRRSFSINVDAMYYTCKAVLPGMLERGRGSIINMSSVASSIKGVPNRFVYGVTKAAVIGLSKAIAADYVAQGVRCNAICPGTIKTPSLGQRVQALGGDEQAVWKSFTDRQPMGRLGDPREIAQLVVYLASDESSFTTGQTHIIDGGWSN.

Residues 63–90 (LITAAGAGIGRESALACARAGAHVIATD) and Asp112 each bind NAD(+). Arg198 is a binding site for substrate. Residue Tyr201 is the Proton acceptor of the active site. NAD(+) contacts are provided by residues Lys205 and 234 to 238 (IKTPS). Substrate is bound by residues Arg242 and Arg260.

It belongs to the short-chain dehydrogenases/reductases (SDR) family.

In terms of biological role, plays a role in the catabolism of L-fucose. Catalyzes the NAD(+)-dependent oxidation of 2-keo-3-deoxy-L-fuconate to 2,4-diketo-3-deoxy-L-fuconate. The protein is 2-keto-3-deoxy-L-fuconate dehydrogenase of Xanthomonas campestris pv. campestris (strain ATCC 33913 / DSM 3586 / NCPPB 528 / LMG 568 / P 25).